Reading from the N-terminus, the 359-residue chain is Aromatic amino acid aminotransferase (359 aa).

The residue at position 223 (lysine 223) is an N6-(pyridoxal phosphate)lysine.

It belongs to the class-II pyridoxal-phosphate-dependent aminotransferase family. In terms of assembly, homodimer. Requires pyridoxal 5'-phosphate as cofactor.

It catalyses the reaction an aromatic L-alpha-amino acid + 2-oxoglutarate = an aromatic oxo-acid + L-glutamate. Its function is as follows. Aminotransferase that catalyzes the conversion of aromatic amino acids and 2-oxoglutarate into corresponding aromatic oxo acids and L-glutamate. The chain is Aromatic amino acid aminotransferase from Streptomyces avermitilis (strain ATCC 31267 / DSM 46492 / JCM 5070 / NBRC 14893 / NCIMB 12804 / NRRL 8165 / MA-4680).